Reading from the N-terminus, the 431-residue chain is Histidine--tRNA ligase (431 aa).

This sequence belongs to the class-II aminoacyl-tRNA synthetase family. As to quaternary structure, homodimer.

The protein localises to the cytoplasm. The catalysed reaction is tRNA(His) + L-histidine + ATP = L-histidyl-tRNA(His) + AMP + diphosphate + H(+). This is Histidine--tRNA ligase from Limosilactobacillus fermentum (strain NBRC 3956 / LMG 18251) (Lactobacillus fermentum).